The primary structure comprises 776 residues: Cilium assembly protein DZIP1L (776 aa).

The segment at 166–189 (HTCHLCDKTFMNATFLRGHIQRRH) adopts a C2H2-type zinc-finger fold. The stretch at 196-450 (GKQKQEQQLG…RKVLAALRNN (255 aa)) forms a coiled coil. Residues S425 and S426 each carry the phosphoserine modification. The tract at residues 520 to 776 (SRAKKRWEGT…SGSRPRIPGW (257 aa)) is disordered. The segment covering 600–618 (GPSSTPVSPGPGLSTPPFS) has biased composition (low complexity). The segment covering 652 to 683 (WSDSETSEESAQSPGKGSDGLASSATLVQSMV) has biased composition (polar residues). The segment covering 685 to 694 (NLEKQLETPA) has biased composition (basic and acidic residues). Positions 709 to 721 (TALQRSSTPARKT) are enriched in polar residues.

The protein belongs to the DZIP C2H2-type zinc-finger protein family. As to quaternary structure, interacts with SEPTIN2.

It is found in the cytoplasm. The protein localises to the cytoskeleton. The protein resides in the cilium basal body. Its subcellular location is the microtubule organizing center. It localises to the centrosome. It is found in the centriole. Its function is as follows. Involved in primary cilium formation. Probably acts as a transition zone protein required for localization of PKD1/PC1 and PKD2/PC2 to the ciliary membrane. This chain is Cilium assembly protein DZIP1L, found in Rattus norvegicus (Rat).